The primary structure comprises 655 residues: Forkhead box protein O1 (655 aa).

Disordered stretches follow at residues 1–63 and 116–158; these read MAEA…SASA and GCLH…SRRN. Thr-24 bears the Phosphothreonine; by PKB/AKT1 or PKB/AKT2 and SGK1 mark. Over residues 33-63 the composition is skewed to low complexity; the sequence is SQSNSATSSPAPSGSAAANPDAAAGLPSASA. The span at 120–141 shows a compositional bias: pro residues; it reads PAPPQPPPPGPLSQHPPVPPAA. A DNA-binding region (fork-head) is located at residues 159–235; the sequence is AWGNLSYADL…VQNEGTGKSS (77 aa). DNA-binding stretches follow at residues 211 to 218 and 234 to 237; these read NSIRHNLS and SSWW. Residues Ser-212, Ser-218, Ser-234, and Ser-235 each carry the phosphoserine; by STK4/MST1 modification. Residues 234 to 344 form a disordered region; the sequence is SSWWMLNPEG…QDDLGEGDVH (111 aa). 2 positions are modified to N6-acetyllysine: Lys-245 and Lys-248. Ser-249 is modified (phosphoserine; by CDK1). Residues Arg-251 and Arg-253 each carry the omega-N-methylarginine; by PRMT1 modification. The short motif at 251 to 253 is the Nuclear localization signal element; the sequence is RRR. Ser-256 bears the Phosphoserine; by PKB/AKT1 and SGK1 mark. 3 positions are modified to N6-acetyllysine: Lys-262, Lys-265, and Lys-274. The span at 264–275 shows a compositional bias: basic residues; it reads AKSRSRAAKKKA. The interval 283 to 563 is sufficient for interaction with NLK; sequence GAGDSPGSQF…RLTQVKTPVQ (281 aa). Ser-287 and Ser-298 each carry phosphoserine. Residues 309–326 show a composition bias toward polar residues; that stretch reads NWSTFRPRTSSNASTISG. Ser-319 carries the post-translational modification Phosphoserine; by PKB/AKT1. Phosphoserine; by CK1 and SGK1 is present on Ser-322. Phosphoserine; by CK1 is present on Ser-325. The residue at position 329 (Ser-329) is a Phosphoserine; by DYRK1A. A Phosphothreonine modification is found at Thr-333. Residues 363–459 are required for interaction with RUNX2; the sequence is SEISNPENME…GGMSQYNCAP (97 aa). Lys-423 bears the N6-acetyllysine mark. A Required for interaction with SIRT1 motif is present at residues 462–466; it reads LKELL. Positions 507–534 are enriched in polar residues; it reads YGSQASHNKMMNPSSHTHPGHAQQTSAV. The tract at residues 507–537 is disordered; that stretch reads YGSQASHNKMMNPSSHTHPGHAQQTSAVNGR.

Interacts with LRPPRC. Interacts with RUNX2; the interaction inhibits RUNX2 transcriptional activity and mediates the IGF1/insulin-dependent BGLAP expression in osteoblasts Interacts with PPP2R1A; the interaction regulates the dephosphorylation of FOXO1 at Thr-24 and Ser-256 leading to its nuclear import. Interacts (acetylated form) with PPARG. Interacts with XBP1 isoform 2; this interaction is direct and leads to FOXO1 ubiquitination and degradation via the proteasome pathway. Interacts with NLK. Interacts with SIRT1; the interaction results in the deacetylation of FOXO1 leading to activation of FOXO1-mediated transcription of genes involved in DNA repair and stress resistance. Binds to CDK1. Interacts with the 14-3-3 proteins, YWHAG and YWHAZ; the interactions require insulin-stimulated phosphorylation on Thr-24, promote nuclear exit and loss of transcriptional activity. Interacts with SKP2; the interaction ubiquitinates FOXO1 leading to its proteasomal degradation. The interaction requires the presence of KRIT1. Interacts (via the C-terminal half) with ATF4 (via its DNA-binding domain); the interaction occurs in osteoblasts, regulates glucose homeostasis via suppression of beta-cell proliferation and subsequent decrease in insulin production. Interacts with PRMT1; the interaction methylates FOXO1, prevents PKB/AKT1 phosphorylation and retains FOXO1 in the nucleus. Interacts with EP300 and CREBBP; the interactions acetylate FOXO1. Interacts with SIRT2; the interaction is disrupted in response to oxidative stress or serum deprivation, leading to increased level of acetylated FOXO1, which promotes stress-induced autophagy by stimulating E1-like activating enzyme ATG7. Interacts (acetylated form) with ATG7; the interaction is increased in response to oxidative stress or serum deprivation and promotes the autophagic process leading to cell death. Interacts (via the Fork-head domain) with CEBPA; the interaction increases when FOXO1 is deacetylated. Interacts with WDFY2. Forms a complex with WDFY2 and AKT1. Interacts with CRY1. Interacts with PPIA/CYPA; the interaction promotes FOXO1 dephosphorylation, nuclear accumulation and transcriptional activity. Interacts with TOX4; FOXO1 is required for full induction of TOX4-dependent activity and the interaction is inhibited by insulin. Interacts (when phosphorylated on Ser-256) with STUB1/CHIP. In terms of processing, phosphorylation by NLK promotes nuclear export and inhibits the transcriptional activity. In response to growth factors, phosphorylation on Thr-24, Ser-256 and Ser-322 by PKB/AKT1 promotes nuclear export and inactivation of transactivational activity. Phosphorylation on Thr-24 is required for binding 14-3-3 proteins. Phosphorylation of Ser-256 decreases DNA-binding activity and promotes the phosphorylation of Thr-24 and Ser-319, permitting phosphorylation of Ser-322 and Ser-325, probably by CDK1, leading to nuclear exclusion and loss of function. Stress signals, such as response to oxygen or nitric oxide, attenuate the PKB/AKT1-mediated phosphorylation leading to nuclear retention. Phosphorylation of Ser-329 is independent of IGF1 and leads to reduced function. Dephosphorylated on Thr-24 and Ser-256 by PP2A in beta-cells under oxidative stress leading to nuclear retention. Phosphorylation of Ser-249 by CDK1 disrupts binding of 14-3-3 proteins leading to nuclear accumulation and has no effect on DNA-binding nor transcriptional activity. Phosphorylation by STK4/MST1 on Ser-212, upon oxidative stress, inhibits binding to 14-3-3 proteins and nuclear export. PPIA/CYPA promotes its dephosphorylation on Ser-256. Ubiquitinated by SKP2. Ubiquitination leads to proteasomal degradation. Ubiquitinated by STUB1/CHIP; when Ser-256 is phosphorylated. Post-translationally, methylation inhibits AKT1-mediated phosphorylation at Ser-256 and is increased by oxidative stress. In terms of processing, acetylated. Acetylation at Lys-262, Lys-265 and Lys-274 are necessary for autophagic cell death induction. Deacetylated by SIRT2 in response to oxidative stress or serum deprivation, thereby negatively regulating FOXO1-mediated autophagic cell death. Once in the nucleus, acetylated by CREBBP/EP300. Acetylation diminishes the interaction with target DNA and attenuates the transcriptional activity. It increases the phosphorylation at Ser-256. Deacetylation by SIRT1 results in reactivation of the transcriptional activity. Oxidative stress by hydrogen peroxide treatment appears to promote deacetylation and uncoupling of insulin-induced phosphorylation. By contrast, resveratrol acts independently of acetylation. Acetylated at Lys-423, promoting its localization to the nucleus and transcription factor activity. Deacetylation at Lys-423 by SIRT6, promotes its translocation into the cytoplasm, preventing its transcription factor activity. Deacetylation and subsequent inhibition by SIRT6 has different effects depending on cell types: it inhibits gluconeogenesis in hepatocytes, promotes glucose sensing in pancreatic beta-cells and regulates lipid catabolism in brown adipocytes. In terms of tissue distribution, expressed in umbilical endothelial cells (at protein level). Abundantly expressed in skeletal muscle and ovary, with lower expression in the heart, placenta, lung, liver, pancreas, spleen, testis and small intestine. Weakly expressed in the brain, thymus, prostate and mucosal lining of the colon.

The protein resides in the cytoplasm. Its subcellular location is the nucleus. In terms of biological role, transcription factor that is the main target of insulin signaling and regulates metabolic homeostasis in response to oxidative stress. Binds to the insulin response element (IRE) with consensus sequence 5'-TT[G/A]TTTTG-3' and the related Daf-16 family binding element (DBE) with consensus sequence 5'-TT[G/A]TTTAC-3'. Activity suppressed by insulin. Main regulator of redox balance and osteoblast numbers and controls bone mass. Orchestrates the endocrine function of the skeleton in regulating glucose metabolism. Also acts as a key regulator of chondrogenic commitment of skeletal progenitor cells in response to lipid availability: when lipids levels are low, translocates to the nucleus and promotes expression of SOX9, which induces chondrogenic commitment and suppresses fatty acid oxidation. Acts synergistically with ATF4 to suppress osteocalcin/BGLAP activity, increasing glucose levels and triggering glucose intolerance and insulin insensitivity. Also suppresses the transcriptional activity of RUNX2, an upstream activator of osteocalcin/BGLAP. Acts as an inhibitor of glucose sensing in pancreatic beta cells by acting as a transcription repressor and suppressing expression of PDX1. In hepatocytes, promotes gluconeogenesis by acting together with PPARGC1A and CEBPA to activate the expression of genes such as IGFBP1, G6PC1 and PCK1. Also promotes gluconeogenesis by directly promoting expression of PPARGC1A and G6PC1. Important regulator of cell death acting downstream of CDK1, PKB/AKT1 and STK4/MST1. Promotes neural cell death. Mediates insulin action on adipose tissue. Regulates the expression of adipogenic genes such as PPARG during preadipocyte differentiation and, adipocyte size and adipose tissue-specific gene expression in response to excessive calorie intake. Regulates the transcriptional activity of GADD45A and repair of nitric oxide-damaged DNA in beta-cells. Required for the autophagic cell death induction in response to starvation or oxidative stress in a transcription-independent manner. Mediates the function of MLIP in cardiomyocytes hypertrophy and cardiac remodeling. Positive regulator of apoptosis in cardiac smooth muscle cells as a result of its transcriptional activation of pro-apoptotic genes. Regulates endothelial cell (EC) viability and apoptosis in a PPIA/CYPA-dependent manner via transcription of CCL2 and BCL2L11 which are involved in EC chemotaxis and apoptosis. The sequence is that of Forkhead box protein O1 from Homo sapiens (Human).